The sequence spans 613 residues: MSDPQTSMAATAAVSPSDYLQPAASTTQDSQPSPLALLAATCSKIGPPAVEAAVTPPAPPQPTPRKLVPIKPAPLPLSPGKNSFGILSSKGNILQIQGSQLSASYPGGQLVFAIQNPTMINKGTRSNANIQYQAVPQIQASNSQTIQVQPNLTNQIQIIPGTNQAIITPSPSSHKPVPIKPAPIQKSSTTTTPVQSGANVVKLTGGGGNVTLTLPVNNLVNASDTGAPTQLLTESPPTPLSKTNKKARKKSLPASQPPVAVAEQVETVLIETTADNIIQAGNNLLIVQSPGGGQPAVVQQVQVVPPKAEQQQVVQIPQQALRVVQAASATLPTVPQKPSQNFQIQAAEPTPTQVYIRTPSGEVQTVLVQDSPPATAAATSNTTCSSPASRAPHLSGTSKKHSAAILRKERPLPKIAPAGSIISLNAAQLAAAAQAMQTININGVQVQGVPVTITNTGGQQQLTVQNVSGNNLTISGLSPTQIQLQMEQALAGETQPGEKRRRMACTCPNCKDGEKRSGEQGKKKHVCHIPDCGKTFRKTSLLRAHVRLHTGERPFVCNWFFCGKRFTRSDELQRHARTHTGDKRFECAQCQKRFMRSDHLTKHYKTHLVTKNL.

Residues 1 to 32 (MSDPQTSMAATAAVSPSDYLQPAASTTQDSQP) form a disordered region. The span at 23–32 (AASTTQDSQP) shows a compositional bias: polar residues. Phosphoserine is present on S78. Over residues 225-235 (TGAPTQLLTES) the composition is skewed to polar residues. The tract at residues 225 to 258 (TGAPTQLLTESPPTPLSKTNKKARKKSLPASQPP) is disordered. The 9aaTAD; inactive motif lies at 361–369 (GEVQTVLVQ). The span at 372-389 (PPATAAATSNTTCSSPAS) shows a compositional bias: low complexity. The interval 372-404 (PPATAAATSNTTCSSPASRAPHLSGTSKKHSAA) is disordered. 3 C2H2-type zinc fingers span residues 525-549 (HVCH…VRLH), 555-579 (FVCN…ARTH), and 585-607 (FECA…YKTH).

This sequence belongs to the Sp1 C2H2-type zinc-finger protein family.

Its subcellular location is the nucleus. Its function is as follows. Binds to GC box promoters elements and selectively activates mRNA synthesis from genes that contain functional recognition sites. In Homo sapiens (Human), this protein is Transcription factor Sp2 (SP2).